The sequence spans 292 residues: Elongation factor Ts (292 aa).

The segment at 80–83 (TDFV) is involved in Mg(2+) ion dislocation from EF-Tu.

The protein belongs to the EF-Ts family.

The protein resides in the cytoplasm. Functionally, associates with the EF-Tu.GDP complex and induces the exchange of GDP to GTP. It remains bound to the aminoacyl-tRNA.EF-Tu.GTP complex up to the GTP hydrolysis stage on the ribosome. In Tolumonas auensis (strain DSM 9187 / NBRC 110442 / TA 4), this protein is Elongation factor Ts.